Consider the following 470-residue polypeptide: Argininosuccinate lyase (470 aa).

Belongs to the lyase 1 family. Argininosuccinate lyase subfamily.

The protein resides in the cytoplasm. It carries out the reaction 2-(N(omega)-L-arginino)succinate = fumarate + L-arginine. It functions in the pathway amino-acid biosynthesis; L-arginine biosynthesis; L-arginine from L-ornithine and carbamoyl phosphate: step 3/3. In Leptospira interrogans serogroup Icterohaemorrhagiae serovar copenhageni (strain Fiocruz L1-130), this protein is Argininosuccinate lyase.